The chain runs to 185 residues: Ribosome-recycling factor (185 aa).

This sequence belongs to the RRF family.

Its subcellular location is the cytoplasm. Its function is as follows. Responsible for the release of ribosomes from messenger RNA at the termination of protein biosynthesis. May increase the efficiency of translation by recycling ribosomes from one round of translation to another. The protein is Ribosome-recycling factor of Saccharopolyspora erythraea (strain ATCC 11635 / DSM 40517 / JCM 4748 / NBRC 13426 / NCIMB 8594 / NRRL 2338).